A 238-amino-acid polypeptide reads, in one-letter code: Aliphatic sulfonates import ATP-binding protein SsuB (238 aa).

An ABC transporter domain is found at 7 to 221 (VSLHQVHQQF…RPGDAAFASL (215 aa)). Residue 39–46 (GRSGSGKT) coordinates ATP.

It belongs to the ABC transporter superfamily. Aliphatic sulfonates importer (TC 3.A.1.17.2) family. The complex is composed of two ATP-binding proteins (SsuB), two transmembrane proteins (SsuC) and a solute-binding protein (SsuA).

The protein resides in the cell inner membrane. It catalyses the reaction ATP + H2O + aliphatic sulfonate-[sulfonate-binding protein]Side 1 = ADP + phosphate + aliphatic sulfonateSide 2 + [sulfonate-binding protein]Side 1.. In terms of biological role, part of the ABC transporter complex SsuABC involved in aliphatic sulfonates import. Responsible for energy coupling to the transport system. The polypeptide is Aliphatic sulfonates import ATP-binding protein SsuB (Granulibacter bethesdensis (strain ATCC BAA-1260 / CGDNIH1)).